The sequence spans 446 residues: GTPase Der (446 aa).

2 EngA-type G domains span residues 2-166 (TVVA…PEAP) and 179-354 (IRVS…RQYN). GTP-binding positions include 8 to 15 (GRPNVGKS), 55 to 59 (DTAGF), 118 to 121 (NKID), 185 to 192 (GRPNVGKS), 232 to 236 (DTAGI), and 297 to 300 (NKWD). The KH-like domain maps to 355 to 440 (QRVTTGIVNR…PIRLIFRPRQ (86 aa)).

This sequence belongs to the TRAFAC class TrmE-Era-EngA-EngB-Septin-like GTPase superfamily. EngA (Der) GTPase family. In terms of assembly, associates with the 50S ribosomal subunit.

In terms of biological role, GTPase that plays an essential role in the late steps of ribosome biogenesis. This Syntrophobacter fumaroxidans (strain DSM 10017 / MPOB) protein is GTPase Der.